We begin with the raw amino-acid sequence, 786 residues long: Cas scaffolding protein family member 4 (786 aa).

The SH3 domain maps to P11–E73. Phosphoserine occurs at positions 200 and 249. The interval S262 to N295 is disordered. Polar residues predominate over residues P273–N295. Position 305 is a phosphoserine (S305). 2 disordered regions span residues Q361–S429 and I612–P670. Residues K364–S373 show a composition bias toward basic and acidic residues. The span at E374–P391 shows a compositional bias: polar residues. 2 positions are modified to phosphoserine: S376 and S390. The segment covering S399–E427 has biased composition (low complexity). Over residues K630–K642 the composition is skewed to basic and acidic residues.

This sequence belongs to the CAS family. Interacts (via SH3 domain) with PTK2/FAK1 (via C-terminus). Phosphorylated on tyrosines by SRC. As to expression, expressed abundantly in lung and spleen. Also highly expressed in ovarian and leukemia cell lines.

Its subcellular location is the cytoplasm. It is found in the cytoskeleton. It localises to the cell junction. The protein resides in the focal adhesion. Its function is as follows. Docking protein that plays a role in tyrosine kinase-based signaling related to cell adhesion and cell spreading. Regulates PTK2/FAK1 activity, focal adhesion integrity, and cell spreading. In Homo sapiens (Human), this protein is Cas scaffolding protein family member 4 (CASS4).